Reading from the N-terminus, the 74-residue chain is ATP synthase subunit 9, mitochondrial (74 aa).

A run of 2 helical transmembrane segments spans residues 16–36 and 50–70; these read GLIGAGVGIGVVFGALILGVA and ILGFAFSEATGLFALMMAFLL.

The protein belongs to the ATPase C chain family. As to quaternary structure, F-type ATPases have 2 components, CF(1) - the catalytic core - and CF(0) - the membrane proton channel. CF(1) has five subunits: alpha(3), beta(3), gamma(1), delta(1), epsilon(1). CF(0) has three main subunits: a, b and c.

The protein resides in the mitochondrion membrane. Functionally, mitochondrial membrane ATP synthase (F(1)F(0) ATP synthase or Complex V) produces ATP from ADP in the presence of a proton gradient across the membrane which is generated by electron transport complexes of the respiratory chain. F-type ATPases consist of two structural domains, F(1) - containing the extramembraneous catalytic core and F(0) - containing the membrane proton channel, linked together by a central stalk and a peripheral stalk. During catalysis, ATP synthesis in the catalytic domain of F(1) is coupled via a rotary mechanism of the central stalk subunits to proton translocation. Part of the complex F(0) domain. A homomeric c-ring of probably 10 subunits is part of the complex rotary element. This Trichophyton rubrum (Athlete's foot fungus) protein is ATP synthase subunit 9, mitochondrial (ATP9).